A 169-amino-acid chain; its full sequence is Peptidyl-prolyl cis-trans isomerase (169 aa).

The PPIase cyclophilin-type domain maps to 5–168; the sequence is FFDMTIGGQP…SEVKIAKCGQ (164 aa).

The protein belongs to the cyclophilin-type PPIase family.

It is found in the cytoplasm. The enzyme catalyses [protein]-peptidylproline (omega=180) = [protein]-peptidylproline (omega=0). Binds cyclosporin A (CsA). CsA mediates some of its effects via an inhibitory action on PPIase. In terms of biological role, PPIases accelerate the folding of proteins. It catalyzes the cis-trans isomerization of proline imidic peptide bonds in oligopeptides. In Unspecified eudicot DB-1992, this protein is Peptidyl-prolyl cis-trans isomerase.